Reading from the N-terminus, the 378-residue chain is Ribosomal RNA large subunit methyltransferase G (378 aa).

The protein belongs to the methyltransferase superfamily. RlmG family.

It localises to the cytoplasm. It carries out the reaction guanosine(1835) in 23S rRNA + S-adenosyl-L-methionine = N(2)-methylguanosine(1835) in 23S rRNA + S-adenosyl-L-homocysteine + H(+). Functionally, specifically methylates the guanine in position 1835 (m2G1835) of 23S rRNA. The polypeptide is Ribosomal RNA large subunit methyltransferase G (Salmonella arizonae (strain ATCC BAA-731 / CDC346-86 / RSK2980)).